The primary structure comprises 175 residues: Sec-independent protein translocase protein TatB (175 aa).

Residues 1–21 traverse the membrane as a helical segment; sequence MLDLGLSKMALIGVVALVVLG. The segment covering 94–115 has biased composition (low complexity); sequence SAVSPGGSAAADAPDGPSAASG. Disordered regions lie at residues 94–118 and 153–175; these read SAVSPGGSAAADAPDGPSAASGEPS and VQSGAARVARHRPASLRRPARFL. The span at 160–175 shows a compositional bias: basic residues; the sequence is VARHRPASLRRPARFL.

Belongs to the TatB family. As to quaternary structure, the Tat system comprises two distinct complexes: a TatABC complex, containing multiple copies of TatA, TatB and TatC subunits, and a separate TatA complex, containing only TatA subunits. Substrates initially bind to the TatABC complex, which probably triggers association of the separate TatA complex to form the active translocon.

It localises to the cell inner membrane. In terms of biological role, part of the twin-arginine translocation (Tat) system that transports large folded proteins containing a characteristic twin-arginine motif in their signal peptide across membranes. Together with TatC, TatB is part of a receptor directly interacting with Tat signal peptides. TatB may form an oligomeric binding site that transiently accommodates folded Tat precursor proteins before their translocation. This chain is Sec-independent protein translocase protein TatB, found in Burkholderia pseudomallei (strain 1106a).